The following is a 251-amino-acid chain: Ribosomal RNA small subunit methyltransferase G (251 aa).

S-adenosyl-L-methionine-binding positions include Gly74, Phe79, 125-126 (AE), and Arg144. The segment at 224-251 (RPAGLPTQHPLGAIEGAPRVESEEPEEP) is disordered.

Belongs to the methyltransferase superfamily. RNA methyltransferase RsmG family.

It is found in the cytoplasm. Its function is as follows. Specifically methylates the N7 position of a guanine in 16S rRNA. This Gloeobacter violaceus (strain ATCC 29082 / PCC 7421) protein is Ribosomal RNA small subunit methyltransferase G.